The sequence spans 494 residues: Aspartyl/glutamyl-tRNA(Asn/Gln) amidotransferase subunit B (494 aa).

It belongs to the GatB/GatE family. GatB subfamily. Heterotrimer of A, B and C subunits.

The catalysed reaction is L-glutamyl-tRNA(Gln) + L-glutamine + ATP + H2O = L-glutaminyl-tRNA(Gln) + L-glutamate + ADP + phosphate + H(+). It carries out the reaction L-aspartyl-tRNA(Asn) + L-glutamine + ATP + H2O = L-asparaginyl-tRNA(Asn) + L-glutamate + ADP + phosphate + 2 H(+). In terms of biological role, allows the formation of correctly charged Asn-tRNA(Asn) or Gln-tRNA(Gln) through the transamidation of misacylated Asp-tRNA(Asn) or Glu-tRNA(Gln) in organisms which lack either or both of asparaginyl-tRNA or glutaminyl-tRNA synthetases. The reaction takes place in the presence of glutamine and ATP through an activated phospho-Asp-tRNA(Asn) or phospho-Glu-tRNA(Gln). This Synechococcus sp. (strain WH7803) protein is Aspartyl/glutamyl-tRNA(Asn/Gln) amidotransferase subunit B.